The primary structure comprises 176 residues: MSRVGKSPIALQGAEVALSDERITVKGPLGSISQNANRLVKVVNDNGTLKFEPADESREANAMSGTMRALVANMVHGVTKGFERKLTLVGVGYRAQAQGDKLNLSLGFSHPVVHQMPEGVKAETPSQTEIVIKGIDKQKVGQVAAEVRGYRPPEPYKGKGVRYANEVVILKETKKK.

This sequence belongs to the universal ribosomal protein uL6 family. Part of the 50S ribosomal subunit.

Its function is as follows. This protein binds to the 23S rRNA, and is important in its secondary structure. It is located near the subunit interface in the base of the L7/L12 stalk, and near the tRNA binding site of the peptidyltransferase center. In Paraburkholderia phymatum (strain DSM 17167 / CIP 108236 / LMG 21445 / STM815) (Burkholderia phymatum), this protein is Large ribosomal subunit protein uL6.